A 757-amino-acid polypeptide reads, in one-letter code: Polymeric immunoglobulin receptor (757 aa).

The first 18 residues, 1 to 18, serve as a signal peptide directing secretion; sequence MSRLFLACLLAIFPVVSM. The Ig-like V-type 1; required for binding to polymeric IgA and IgM domain occupies 19–126; the sequence is KSPIFGPEEV…RGLNFDVSLE (108 aa). Residues 19 to 632 lie on the Extracellular side of the membrane; sequence KSPIFGPEEV…TGYSGSSKAL (614 aa). Intrachain disulfides connect cysteine 40–cysteine 110, cysteine 56–cysteine 64, cysteine 152–cysteine 220, cysteine 257–cysteine 324, cysteine 271–cysteine 279, cysteine 370–cysteine 440, and cysteine 384–cysteine 394. N-linked (GlcNAc...) asparagine glycosylation occurs at asparagine 83. Ig-like V-type domains follow at residues 145–237, 250–341, 353–457, and 461–560; these read GRTV…DLQV, RSSV…VQAW, ASPS…LKVV, and PSLK…VYVA. N-linked (GlcNAc...) asparagine glycosylation is found at asparagine 420 and asparagine 468. Cystine bridges form between cysteine 481–cysteine 543, cysteine 485–cysteine 519, and cysteine 495–cysteine 502. The disordered stretch occupies residues 607-627; the sequence is KDAAGGPGAPADPGRPTGYSG. The helical transmembrane segment at 633–653 threads the bilayer; it reads VSTLVPLALVLVAGVVAIGVV. The Cytoplasmic segment spans residues 654-757; the sequence is RARHRKNVDR…AATQNGPTEA (104 aa). 4 positions are modified to phosphoserine: serine 665, serine 674, serine 681, and serine 727. Residues 679–688 are compositionally biased toward basic and acidic residues; the sequence is ENSRDFEGRD. Residues 679-730 form a disordered region; sequence ENSRDFEGRDNMGASPEAQETSLGGKDEFATTTEDTVESKEPKKAKRSSKEE.

Interacts (mainly via CDR1-like domain) with dimeric IgA. Interacts (mainly via CDR2-like domain) with pentameric IgM. As to quaternary structure, either free or part of the secretory IgA (sIgA) complex that consists of two, four or five IgA monomers, and two additional non-Ig polypeptides, namely the JCHAIN and the secretory component (the proteolytic product of PIGR). Free secretory component interacts with bacterial antigens toxA of C.difficile and eae of E.coli. In terms of processing, in the absence of dimeric IgA, Ser-727 is phosphorylated which allows PIGR to function normally. N-glycosylated. N-glycosylation is required for anchoring IgA molecules to mucus, but is not necessary for Ig binding. Found in mammary gland, jejunum, lung, kidney and small intestine.

It is found in the cell membrane. The protein resides in the secreted. In terms of biological role, mediates selective transcytosis of polymeric IgA and IgM across mucosal epithelial cells. Binds polymeric IgA and IgM at the basolateral surface of epithelial cells. The complex is then transported across the cell to be secreted at the apical surface. During this process, a cleavage occurs that separates the extracellular (known as the secretory component) from the transmembrane segment. Functionally, through its N-linked glycans ensures anchoring of secretory IgA (sIgA) molecules to mucus lining the epithelial surface to neutralize extracellular pathogens. On its own (free form) may act as a non-specific microbial scavenger to prevent pathogen interaction with epithelial cells. The protein is Polymeric immunoglobulin receptor (PIGR) of Bos taurus (Bovine).